A 1647-amino-acid polypeptide reads, in one-letter code: MAP kinase-activating death domain protein (1647 aa).

Residues tyrosine 14–aspartate 268 form the uDENN domain. Basic and acidic residues predominate over residues glutamate 108–threonine 122. Positions glutamate 108–arginine 168 are disordered. The segment covering serine 128–serine 141 has biased composition (low complexity). The span at leucine 142–proline 157 shows a compositional bias: polar residues. A Phosphoserine modification is found at serine 156. Positions arginine 158–serine 167 are enriched in basic residues. One can recognise a cDENN domain in the interval arginine 289–lysine 429. The region spanning alanine 431–arginine 565 is the dDENN domain. 2 disordered regions span residues alanine 604 to serine 636 and asparagine 678 to glycine 842. A compositionally biased stretch (acidic residues) spans serine 615–aspartate 630. A phosphoserine mark is found at serine 689 and serine 692. The span at serine 689–arginine 699 shows a compositional bias: polar residues. Residues serine 700–threonine 712 show a composition bias toward low complexity. Over residues asparagine 750 to tyrosine 768 the composition is skewed to basic and acidic residues. The segment covering glutamate 790 to arginine 804 has biased composition (polar residues). Residues serine 813, serine 818, and serine 820 each carry the phosphoserine modification. A compositionally biased stretch (low complexity) spans arginine 827 to threonine 840. 5 positions are modified to phosphoserine: serine 858, serine 862, serine 916, serine 921, and serine 930. Disordered regions lie at residues glutamine 913–asparagine 941, lysine 1051–serine 1110, and valine 1146–isoleucine 1243. The span at glutamine 932–asparagine 941 shows a compositional bias: polar residues. Serine 1059 carries the post-translational modification Phosphoserine. Residues threonine 1061 and threonine 1066 each carry the phosphothreonine modification. Serine 1110 carries the post-translational modification Phosphoserine. Composition is skewed to polar residues over residues glutamine 1158 to arginine 1173, arginine 1189 to glutamate 1207, and serine 1234 to isoleucine 1243. At threonine 1237 the chain carries Phosphothreonine. 2 positions are modified to phosphoserine: serine 1239 and serine 1270. The 76-residue stretch at glycine 1340–glutamate 1415 folds into the Death domain.

This sequence belongs to the MADD family. As to quaternary structure, interacts (via death domain) with TNFRSF1A (via death domain). Interacts with PIDD1. Interacts with YWHAZ. Interacts (via death domain) with KIF1B; links the motor KIF1B to Rab3-carrying vesicles in anterograde synaptic vesicle transport. Interacts with KIF1A. Interacts (via uDENN domain) with RAB3A, RAB3B, RAB3C and RAB3D; the GTP-bound form of the Rab proteins is preferred for interaction. As to expression, expressed in testis, ovary, brain and heart. Expressed in spleen, thymus, prostate, testis, ovary, small instestine and colon. Expressed in liver. In terms of tissue distribution, not detected in the brain, breast, kidney, lung, ovary, pancreas, testis, uterus, stomach and thyroid. Expressed in the brain, breast, kidney, lung, ovary, pancreas, testis, uterus, stomach and thyroid.

The protein resides in the cell membrane. It is found in the cytoplasm. It localises to the cell projection. Its subcellular location is the axon. Guanyl-nucleotide exchange factor that regulates small GTPases of the Rab family. Converts GDP-bound inactive form of RAB27A and RAB27B to the GTP-bound active forms. Converts GDP-bound inactive form of RAB3A, RAB3C and RAB3D to the GTP-bound active forms, GTPases involved in synaptic vesicle exocytosis and vesicle secretion. Plays a role in synaptic vesicle formation and in vesicle trafficking at the neuromuscular junction. Involved in up-regulating a post-docking step of synaptic exocytosis in central synapses. Probably by binding to the motor proteins KIF1B and KIF1A, mediates motor-dependent transport of GTP-RAB3A-positive vesicles to the presynaptic nerve terminals. Plays a role in TNFA-mediated activation of the MAPK pathway, including ERK1/2. May link TNFRSF1A with MAP kinase activation. May be involved in the regulation of TNFA-induced apoptosis. The protein is MAP kinase-activating death domain protein of Homo sapiens (Human).